A 352-amino-acid polypeptide reads, in one-letter code: tRNA-specific 2-thiouridylase MnmA (352 aa).

ATP-binding positions include 11 to 18 and methionine 37; that span reads AMSGGVDS. Residue cysteine 101 is the Nucleophile of the active site. Cysteine 101 and cysteine 197 are joined by a disulfide. Glycine 125 provides a ligand contact to ATP. An interaction with tRNA region spans residues 147 to 149; sequence KDQ. Cysteine 197 functions as the Cysteine persulfide intermediate in the catalytic mechanism. The interval 302–303 is interaction with tRNA; it reads RY.

This sequence belongs to the MnmA/TRMU family.

It localises to the cytoplasm. The enzyme catalyses S-sulfanyl-L-cysteinyl-[protein] + uridine(34) in tRNA + AH2 + ATP = 2-thiouridine(34) in tRNA + L-cysteinyl-[protein] + A + AMP + diphosphate + H(+). Functionally, catalyzes the 2-thiolation of uridine at the wobble position (U34) of tRNA, leading to the formation of s(2)U34. The chain is tRNA-specific 2-thiouridylase MnmA from Syntrophotalea carbinolica (strain DSM 2380 / NBRC 103641 / GraBd1) (Pelobacter carbinolicus).